A 140-amino-acid chain; its full sequence is ATP synthase epsilon chain (140 aa).

Belongs to the ATPase epsilon chain family. F-type ATPases have 2 components, CF(1) - the catalytic core - and CF(0) - the membrane proton channel. CF(1) has five subunits: alpha(3), beta(3), gamma(1), delta(1), epsilon(1). CF(0) has three main subunits: a, b and c.

Its subcellular location is the cell inner membrane. Its function is as follows. Produces ATP from ADP in the presence of a proton gradient across the membrane. This chain is ATP synthase epsilon chain, found in Nitrosococcus oceani (strain ATCC 19707 / BCRC 17464 / JCM 30415 / NCIMB 11848 / C-107).